Here is a 739-residue protein sequence, read N- to C-terminus: MDRGTRRIWVSQNQGDTDLDYHKILTAGLTVQQGIVRQKIISVYLVDNLEAMCQLVIQAFEAGIDFQENADSFLLMLCLHHAYQGDYKLFLESNAVQYLEGHGFKFELRKKDGVNRLEELLPAATSGKNIRRTLAALPEEETTEANAGQFLSFASLFLPKLVVGEKACLEKVQRQIQVHAEQGLIQYPTAWQSVGHMMVIFRLMRTNFLIKYLLIHQGMHMVAGHDANDAVIANSVAQARFSGLLIVKTVLDHILQKTDQGVRLHPLARTAKVRNEVNAFKAALSSLAKHGEYAPFARLLNLSGVNNLEHGLYPQLSAIALGVATAHGSTLAGVNVGEQYQQLREAATEAEKQLQQYAESRELDSLGLDDQERRILMNFHQKKNEISFQQTNAMVTLRKERLAKLTEAITLASRPNLGSRQDDDNEIPFPGPISNNPDQDHLEDDPRDSRDTIIPNSAIDPEDGDFENYNGYHDDEVGTAGDLVLFDLDDHEDDNKAFELQDSSPQSQREIERERLIHPPPGNNKDDNRASDNNQQSADSEEQEGQYNRHRGPERTTANRRLSPVHEEDTPIDQGDDDPSSPPPLESDDDDASSSQQDPDYTAVAPPAPVYRSAEAHEPPHKSSNEPAETSQLNEDPDIGQSKSMQKLGETYHHLLRTQGPFEAINYYHMMKDEPVIFSTDDGKEYTYPDSLEEAYPPWLTEKERLDNENRYIYINNQQFFWPVMSPRDKFLAILQHHQ.

Positions 334 to 363 (VNVGEQYQQLREAATEAEKQLQQYAESREL) form a coiled coil. 2 disordered regions span residues 414 to 475 (RPNL…YHDD) and 498 to 642 (FELQ…IGQS). Residues 570–579 (TPIDQGDDDP) show a composition bias toward acidic residues. Over residues 614–624 (AEAHEPPHKSS) the composition is skewed to basic and acidic residues. A compositionally biased stretch (polar residues) spans 625–634 (NEPAETSQLN).

Belongs to the filoviruses nucleoprotein family. Homooligomer. Homomultimerizes to form the nucleocapsid. Binds to viral genomic RNA. Interacts with VP35 and VP30 to form the nucleocapsid. Interacts with host PPP2R5C; this interaction leads to VP30 dephosphorylation and viral transcription. Interacts with VP24; this interaction facilitates nucleocapsid assembly and genome packaging. Interacts with matrix protein VP40; this interaction allows recruitment of the nucleocapsid into progeny virions. Interacts with host STAU1. Interacts with host NXF1 (via RNA-binding domain); this interaction recruits NXF1 to the inclusion bodies were viral replication takes place, probably to export viral mRNA-NXF1 complexes from these sites. Interacts with host CCDC92; this interaction sequesters NP in the host cytoplasm. Interacts with host TRIM14. Post-translationally, phosphorylated and O-glycosylated by host. Acetylated by host EP300 in vitro.

It localises to the virion. The protein resides in the host cytoplasm. Oligomerizes into helical capsid to encapsidate the viral genome, protecting it from nucleases and the cellular innate immune response. VP35 binds to and stabilizes monomeric NP, keeping it soluble. Upon virus replication, NP is recruited to bind cooperatively viral genomic RNA and VP35 is released. The encapsidated genomic RNA is termed the nucleocapsid and serves as template for transcription and replication. The nucleocapsid is helical with a pitch of 10.81 NP per turn and a diameter of about 22nm. Each NP binds to six nucleotides of viral genomic RNA, three being exposed to the solvant and three hidden into the nucleocapsid. Also recruits host PPP2R5C phosphatase to dephosphorylate VP30 and thereby promote viral transcription. Upon virion assembly and budding, NP binds to VP24 and possibly host STAU1. The chain is Nucleoprotein (NP) from Homo sapiens (Human).